A 397-amino-acid polypeptide reads, in one-letter code: Acetate kinase 2 (397 aa).

A Mg(2+)-binding site is contributed by asparagine 10. An ATP-binding site is contributed by lysine 17. Arginine 90 contacts substrate. Catalysis depends on aspartate 147, which acts as the Proton donor/acceptor. Residues 207–211, 281–283, and 329–333 each bind ATP; these read HLGNG, DAR, and GIGEN. A Mg(2+)-binding site is contributed by glutamate 385.

Belongs to the acetokinase family. As to quaternary structure, homodimer. Requires Mg(2+) as cofactor. Mn(2+) serves as cofactor.

It localises to the cytoplasm. It carries out the reaction acetate + ATP = acetyl phosphate + ADP. The protein operates within metabolic intermediate biosynthesis; acetyl-CoA biosynthesis; acetyl-CoA from acetate: step 1/2. In terms of biological role, catalyzes the formation of acetyl phosphate from acetate and ATP. Can also catalyze the reverse reaction. The polypeptide is Acetate kinase 2 (Vibrio cholerae serotype O1 (strain ATCC 39315 / El Tor Inaba N16961)).